A 155-amino-acid chain; its full sequence is Large ribosomal subunit protein uL15 (155 aa).

The span at 1–13 (MKLNELRDCEGAT) shows a compositional bias: basic and acidic residues. A disordered region spans residues 1–47 (MKLNELRDCEGATKNRKRIGRGIGSGTGKTGGRGVKGQKSRSGVSLN). The segment covering 21–35 (RGIGSGTGKTGGRGV) has biased composition (gly residues).

This sequence belongs to the universal ribosomal protein uL15 family. As to quaternary structure, part of the 50S ribosomal subunit.

Its function is as follows. Binds to the 23S rRNA. The chain is Large ribosomal subunit protein uL15 from Bartonella tribocorum (strain CIP 105476 / IBS 506).